Reading from the N-terminus, the 681-residue chain is Auxin response factor 8 (681 aa).

The TF-B3 DNA-binding region spans 120–222; the sequence is FAKTLTQSDA…DLHVGIRRAK (103 aa). Disordered regions lie at residues 474 to 518 and 534 to 577; these read LRRP…AKPP and SLSG…TSSE. Polar residues-rich tracts occupy residues 534–555 and 564–577; these read SLSGTTSPAATGNSSLNWNTEK and GVIQNSPTDNTSSE. Residues 595-675 enclose the PB1 domain; it reads PGQCKVFIES…RRLTILTDAG (81 aa).

It belongs to the ARF family. In terms of assembly, homodimers and heterodimers. In terms of tissue distribution, expressed in roots, culms, leaves and young panicles.

It localises to the nucleus. In terms of biological role, auxin response factors (ARFs) are transcriptional factors that bind specifically to the DNA sequence 5'-TGTCTC-3' found in the auxin-responsive promoter elements (AuxREs). This Oryza sativa subsp. japonica (Rice) protein is Auxin response factor 8 (ARF8).